The following is a 316-amino-acid chain: Mitochondrial GTPase 1 (316 aa).

One can recognise a CP-type G domain in the interval 28 to 203; the sequence is MKQMQQKLKQ…LLDTPGILKP (176 aa). GTP is bound by residues 73–76, 147–152, and Gly199; these read NKKD and NVGKSS.

The protein belongs to the TRAFAC class YlqF/YawG GTPase family. MTG1 subfamily.

The protein resides in the mitochondrion inner membrane. Plays a role in the regulation of the mitochondrial ribosome assembly and of translational activity. Displays mitochondrial GTPase activity. This is Mitochondrial GTPase 1 from Aedes aegypti (Yellowfever mosquito).